The following is a 111-amino-acid chain: Propane 2-monooxygenase, effector component (111 aa).

It belongs to the TmoD/XamoD family. In terms of assembly, the propane 2-monooxygenase multicomponent enzyme system is composed of an electron transfer component and a monooxygenase component interacting with the effector protein PrmD. The electron transfer component is composed of a reductase (PrmB), and the monooxygenase component is formed by a large subunit (PrmA) and a small subunit (PrmC).

Functionally, effector component of the propane 2-monooxygenase multicomponent enzyme system which is involved in the degradation of propane via the O2-dependent hydroxylation of propane. This is Propane 2-monooxygenase, effector component from Gordonia sp. (strain TY-5).